Reading from the N-terminus, the 465-residue chain is Cysteine--tRNA ligase (465 aa).

Position 27 (Cys-27) interacts with Zn(2+). A 'HIGH' region motif is present at residues 29 to 39 (PTVYDDAHLGH). Zn(2+) contacts are provided by Cys-207, His-237, and Glu-241. The 'KMSKS' region motif lies at 269–273 (KMSKS). Lys-272 contacts ATP.

The protein belongs to the class-I aminoacyl-tRNA synthetase family. As to quaternary structure, monomer. Zn(2+) serves as cofactor.

The protein localises to the cytoplasm. It carries out the reaction tRNA(Cys) + L-cysteine + ATP = L-cysteinyl-tRNA(Cys) + AMP + diphosphate. This Helicobacter pylori (strain J99 / ATCC 700824) (Campylobacter pylori J99) protein is Cysteine--tRNA ligase (cysS).